A 319-amino-acid polypeptide reads, in one-letter code: Coproporphyrin III ferrochelatase 2 (319 aa).

Residues Tyr13, Arg30, 46–47 (RY), Ser54, and Tyr125 contribute to the Fe-coproporphyrin III site. Fe(2+) contacts are provided by His181 and Glu262.

Belongs to the ferrochelatase family.

The protein resides in the cytoplasm. It catalyses the reaction Fe-coproporphyrin III + 2 H(+) = coproporphyrin III + Fe(2+). It functions in the pathway porphyrin-containing compound metabolism; protoheme biosynthesis. In terms of biological role, involved in coproporphyrin-dependent heme b biosynthesis. Catalyzes the insertion of ferrous iron into coproporphyrin III to form Fe-coproporphyrin III. The chain is Coproporphyrin III ferrochelatase 2 from Bacillus cereus (strain ATCC 14579 / DSM 31 / CCUG 7414 / JCM 2152 / NBRC 15305 / NCIMB 9373 / NCTC 2599 / NRRL B-3711).